The chain runs to 150 residues: Photosystem I reaction center subunit XI (150 aa).

Residues 1–72 (MSDFIQSYNN…DKLGPLRNTD (72 aa)) are Stromal-facing. Residues 73–93 (VALLSGFLSAVGLIIILTVCL) form a helical membrane-spanning segment. At 94 to 118 (SMYGNVSFDKDDAKDLLQTTEGWGQ) the chain is on the lumenal side. Residues 119–139 (FTAGFLVGAVGGSGFAYLLLA) form a helical membrane-spanning segment. Topologically, residues 140–150 (NIPVLQNLGLS) are stromal.

Belongs to the PsaL family.

Its subcellular location is the plastid. The protein localises to the chloroplast thylakoid membrane. The sequence is that of Photosystem I reaction center subunit XI from Gracilaria tenuistipitata var. liui (Red alga).